Reading from the N-terminus, the 397-residue chain is Acetate kinase (397 aa).

A Mg(2+)-binding site is contributed by N7. K14 serves as a coordination point for ATP. R90 provides a ligand contact to substrate. Residue D147 is the Proton donor/acceptor of the active site. Residues 207–211 (HLGNG), 282–284 (DFR), and 330–334 (GIGEN) contribute to the ATP site. Mg(2+) is bound at residue E384.

It belongs to the acetokinase family. As to quaternary structure, homodimer. It depends on Mg(2+) as a cofactor. Requires Mn(2+) as cofactor.

It is found in the cytoplasm. The catalysed reaction is acetate + ATP = acetyl phosphate + ADP. It participates in metabolic intermediate biosynthesis; acetyl-CoA biosynthesis; acetyl-CoA from acetate: step 1/2. Its function is as follows. Catalyzes the formation of acetyl phosphate from acetate and ATP. Can also catalyze the reverse reaction. The protein is Acetate kinase of Agathobacter rectalis (strain ATCC 33656 / DSM 3377 / JCM 17463 / KCTC 5835 / VPI 0990) (Eubacterium rectale).